The chain runs to 378 residues: Erythronate-4-phosphate dehydrogenase (378 aa).

Residues serine 45 and threonine 66 each coordinate substrate. Aspartate 146 and threonine 175 together coordinate NAD(+). Arginine 208 is a catalytic residue. Aspartate 232 is an NAD(+) binding site. The active site involves glutamate 237. Catalysis depends on histidine 254, which acts as the Proton donor. Glycine 257 contributes to the NAD(+) binding site. Residue tyrosine 258 participates in substrate binding.

The protein belongs to the D-isomer specific 2-hydroxyacid dehydrogenase family. PdxB subfamily. In terms of assembly, homodimer.

The protein resides in the cytoplasm. It carries out the reaction 4-phospho-D-erythronate + NAD(+) = (R)-3-hydroxy-2-oxo-4-phosphooxybutanoate + NADH + H(+). It functions in the pathway cofactor biosynthesis; pyridoxine 5'-phosphate biosynthesis; pyridoxine 5'-phosphate from D-erythrose 4-phosphate: step 2/5. Functionally, catalyzes the oxidation of erythronate-4-phosphate to 3-hydroxy-2-oxo-4-phosphonooxybutanoate. The polypeptide is Erythronate-4-phosphate dehydrogenase (Escherichia coli O139:H28 (strain E24377A / ETEC)).